Reading from the N-terminus, the 420-residue chain is MKSEELFRRASNVLPGGVSSPVRRFDPHPFFAAGGSGCLLESVDGESYIDYCLAYGPLILGHAHPRVVEAVNEQIKRGTTYGVPTEGEIELAEAIIERVPCAEMVRFTNSGTEATMAAVRLARAFTGRDRIVKFEGSYHGAHDYVLVRPGSGAATAPDSPGIPVDTVRNTLTVPFNHEEAMAELIEGAGEDIACILVEPVMGNIGCIEPENGYLQFLRDITRENDIILIFDEVITGFRLAPGGAQEYYRVEPDLVTLGKIVGGGFPMGALAGRREIMENISPAGNVYQAGTFNGNPVSVTAGRETLRLLDGRMYSDLERKGSTLRAGLRDLLSDLDLEYQVTGPASMFQLYFTGEEVRNYGDAKKSDTVLFMEYFHGLLERGVFIPPSQFECCFISAAHESEHIEATLEAAEEVLSGLKN.

K259 is subject to N6-(pyridoxal phosphate)lysine.

It belongs to the class-III pyridoxal-phosphate-dependent aminotransferase family. HemL subfamily. Pyridoxal 5'-phosphate serves as cofactor.

It is found in the cytoplasm. It catalyses the reaction (S)-4-amino-5-oxopentanoate = 5-aminolevulinate. The protein operates within porphyrin-containing compound metabolism; protoporphyrin-IX biosynthesis; 5-aminolevulinate from L-glutamyl-tRNA(Glu): step 2/2. In Methanothermobacter thermautotrophicus (strain ATCC 29096 / DSM 1053 / JCM 10044 / NBRC 100330 / Delta H) (Methanobacterium thermoautotrophicum), this protein is Glutamate-1-semialdehyde 2,1-aminomutase (hemL).